The primary structure comprises 498 residues: Glycerol kinase (498 aa).

Threonine 12 contacts ADP. Residues threonine 12, threonine 13, and serine 14 each coordinate ATP. Sn-glycerol 3-phosphate is bound at residue threonine 12. Arginine 16 lines the ADP pocket. Residues arginine 82, glutamate 83, tyrosine 134, and aspartate 243 each contribute to the sn-glycerol 3-phosphate site. Glycerol is bound by residues arginine 82, glutamate 83, tyrosine 134, aspartate 243, and glutamine 244. The ADP site is built by threonine 265 and glycine 308. Residues threonine 265, glycine 308, glutamine 312, and glycine 409 each coordinate ATP. ADP-binding residues include glycine 409 and asparagine 413.

It belongs to the FGGY kinase family. As to quaternary structure, homotetramer and homodimer (in equilibrium).

It catalyses the reaction glycerol + ATP = sn-glycerol 3-phosphate + ADP + H(+). Its pathway is polyol metabolism; glycerol degradation via glycerol kinase pathway; sn-glycerol 3-phosphate from glycerol: step 1/1. Its activity is regulated as follows. Activated by phosphorylation and inhibited by fructose 1,6-bisphosphate (FBP). In terms of biological role, key enzyme in the regulation of glycerol uptake and metabolism. Catalyzes the phosphorylation of glycerol to yield sn-glycerol 3-phosphate. The polypeptide is Glycerol kinase (Clostridium botulinum (strain Langeland / NCTC 10281 / Type F)).